A 192-amino-acid chain; its full sequence is 7-methyl-GTP pyrophosphatase (192 aa).

Catalysis depends on aspartate 69, which acts as the Proton acceptor.

This sequence belongs to the Maf family. YceF subfamily. Requires a divalent metal cation as cofactor.

It localises to the cytoplasm. It catalyses the reaction N(7)-methyl-GTP + H2O = N(7)-methyl-GMP + diphosphate + H(+). Functionally, nucleoside triphosphate pyrophosphatase that hydrolyzes 7-methyl-GTP (m(7)GTP). May have a dual role in cell division arrest and in preventing the incorporation of modified nucleotides into cellular nucleic acids. The polypeptide is 7-methyl-GTP pyrophosphatase (maf-1) (Pseudomonas syringae pv. tomato (strain ATCC BAA-871 / DC3000)).